We begin with the raw amino-acid sequence, 240 residues long: Proteasome subunit alpha (240 aa).

It belongs to the peptidase T1A family. The 20S proteasome core is composed of 14 alpha and 14 beta subunits that assemble into four stacked heptameric rings, resulting in a barrel-shaped structure. The two inner rings, each composed of seven catalytic beta subunits, are sandwiched by two outer rings, each composed of seven alpha subunits. The catalytic chamber with the active sites is on the inside of the barrel. Has a gated structure, the ends of the cylinder being occluded by the N-termini of the alpha-subunits. Is capped at one or both ends by the proteasome regulatory ATPase, PAN.

Its subcellular location is the cytoplasm. The formation of the proteasomal ATPase PAN-20S proteasome complex, via the docking of the C-termini of PAN into the intersubunit pockets in the alpha-rings, triggers opening of the gate for substrate entry. Interconversion between the open-gate and close-gate conformations leads to a dynamic regulation of the 20S proteasome proteolysis activity. Functionally, component of the proteasome core, a large protease complex with broad specificity involved in protein degradation. This is Proteasome subunit alpha from Methanoregula boonei (strain DSM 21154 / JCM 14090 / 6A8).